We begin with the raw amino-acid sequence, 95 residues long: MSITAEKKQELIKKFALHENDTGSPEVQIAVLTERIRNLTEHIKANKKDLHSRRGLIGMVNKRRKLLNYLKRESEERYRKIIEALNIRETSNESK.

Belongs to the universal ribosomal protein uS15 family. As to quaternary structure, part of the 30S ribosomal subunit. Forms a bridge to the 50S subunit in the 70S ribosome, contacting the 23S rRNA.

One of the primary rRNA binding proteins, it binds directly to 16S rRNA where it helps nucleate assembly of the platform of the 30S subunit by binding and bridging several RNA helices of the 16S rRNA. Its function is as follows. Forms an intersubunit bridge (bridge B4) with the 23S rRNA of the 50S subunit in the ribosome. In Sulfurihydrogenibium sp. (strain YO3AOP1), this protein is Small ribosomal subunit protein uS15.